The following is a 64-amino-acid chain: Sulfur carrier protein ThiS (64 aa).

Gly64 carries the post-translational modification 1-thioglycine; alternate. Residue Gly64 is modified to Glycyl adenylate; alternate. Gly64 is covalently cross-linked (Glycyl cysteine thioester (Gly-Cys) (interchain with C-192 in TtuC); alternate).

It belongs to the sulfur carrier protein ThiS family. C-terminal thiocarboxylation occurs in 2 steps, it is first acyl-adenylated (-COAMP) by TtuC, then thiocarboxylated (-COSH) by the cysteine desulfurases IscS or SufS.

It participates in cofactor biosynthesis; thiamine diphosphate biosynthesis. Is the sulfur donor in the synthesis of the thiazole phosphate moiety of thiamine phosphate. The protein is Sulfur carrier protein ThiS of Thermus thermophilus (strain ATCC BAA-163 / DSM 7039 / HB27).